The primary structure comprises 447 residues: Replication-associated recombination protein A (447 aa).

57 to 64 (GPPGTGKT) is a binding site for ATP.

It belongs to the AAA ATPase family. RarA/MGS1/WRNIP1 subfamily.

Functionally, DNA-dependent ATPase that plays important roles in cellular responses to stalled DNA replication processes. The chain is Replication-associated recombination protein A (rarA) from Escherichia coli O157:H7.